The following is a 342-amino-acid chain: Protein-glutamate methylesterase/protein-glutamine glutaminase 4 (342 aa).

The 118-residue stretch at 2–119 (NIGIVNDLPL…GGSADPSQPL (118 aa)) folds into the Response regulatory domain. Position 53 is a 4-aspartylphosphate (D53). In terms of domain architecture, CheB-type methylesterase spans 144 to 337 (PAPQGALPPL…DQLISLVQRN (194 aa)). Residues S159, H186, and D279 contribute to the active site.

This sequence belongs to the CheB family. In terms of processing, phosphorylated by CheA. Phosphorylation of the N-terminal regulatory domain activates the methylesterase activity.

The protein localises to the cytoplasm. The catalysed reaction is [protein]-L-glutamate 5-O-methyl ester + H2O = L-glutamyl-[protein] + methanol + H(+). It carries out the reaction L-glutaminyl-[protein] + H2O = L-glutamyl-[protein] + NH4(+). Functionally, involved in chemotaxis. Part of a chemotaxis signal transduction system that modulates chemotaxis in response to various stimuli. Catalyzes the demethylation of specific methylglutamate residues introduced into the chemoreceptors (methyl-accepting chemotaxis proteins or MCP) by CheR. Also mediates the irreversible deamidation of specific glutamine residues to glutamic acid. The polypeptide is Protein-glutamate methylesterase/protein-glutamine glutaminase 4 (Burkholderia thailandensis (strain ATCC 700388 / DSM 13276 / CCUG 48851 / CIP 106301 / E264)).